Reading from the N-terminus, the 548-residue chain is C-type lectin domain family 4 member F (548 aa).

Residues 1-42 (MKEAELNRDMARYCTDNQCVSLQPQGLGPKSAALMAPRTLRH) lie on the Cytoplasmic side of the membrane. A helical; Signal-anchor for type II membrane protein transmembrane segment spans residues 43-69 (VQVILALMVVTVIFSLLALFVVASQPW). At 70–548 (RPEWNKEPPS…STGWSAARVG (479 aa)) the chain is on the extracellular side. 6 N-linked (GlcNAc...) asparagine glycosylation sites follow: asparagine 86, asparagine 92, asparagine 115, asparagine 132, asparagine 209, and asparagine 255. The C-type lectin domain occupies 438–538 (KFCTSQGAHL…GSSYPWVCKK (101 aa)). Cystine bridges form between cysteine 440–cysteine 536 and cysteine 516–cysteine 528.

In terms of tissue distribution, kupffer cells.

The protein localises to the membrane. Receptor with an affinity for galactose and fucose. Could be involved in endocytosis. This is C-type lectin domain family 4 member F (Clec4f) from Mus musculus (Mouse).